The sequence spans 37 residues: Cytochrome b6-f complex subunit 5 (37 aa).

A helical membrane pass occupies residues 5–25 (LLSGIVLGLIPITLLGLFVTA).

It belongs to the PetG family. In terms of assembly, the 4 large subunits of the cytochrome b6-f complex are cytochrome b6, subunit IV (17 kDa polypeptide, PetD), cytochrome f and the Rieske protein, while the 4 small subunits are PetG, PetL, PetM and PetN. The complex functions as a dimer.

The protein resides in the plastid. It is found in the chloroplast thylakoid membrane. Its function is as follows. Component of the cytochrome b6-f complex, which mediates electron transfer between photosystem II (PSII) and photosystem I (PSI), cyclic electron flow around PSI, and state transitions. PetG is required for either the stability or assembly of the cytochrome b6-f complex. This chain is Cytochrome b6-f complex subunit 5, found in Marchantia polymorpha (Common liverwort).